The following is a 240-amino-acid chain: 2,3,4,5-tetrahydropyridine-2,6-dicarboxylate N-acetyltransferase (240 aa).

The protein belongs to the transferase hexapeptide repeat family. DapH subfamily.

It carries out the reaction (S)-2,3,4,5-tetrahydrodipicolinate + acetyl-CoA + H2O = L-2-acetamido-6-oxoheptanedioate + CoA. It functions in the pathway amino-acid biosynthesis; L-lysine biosynthesis via DAP pathway; LL-2,6-diaminopimelate from (S)-tetrahydrodipicolinate (acetylase route): step 1/3. Catalyzes the transfer of an acetyl group from acetyl-CoA to tetrahydrodipicolinate. This chain is 2,3,4,5-tetrahydropyridine-2,6-dicarboxylate N-acetyltransferase, found in Shouchella clausii (strain KSM-K16) (Alkalihalobacillus clausii).